The following is a 95-amino-acid chain: UPF0358 protein BcerKBAB4_3775 (95 aa).

Belongs to the UPF0358 family.

The polypeptide is UPF0358 protein BcerKBAB4_3775 (Bacillus mycoides (strain KBAB4) (Bacillus weihenstephanensis)).